Reading from the N-terminus, the 384-residue chain is Protein cutoff (384 aa).

The protein belongs to the DXO/Dom3Z family. Component of the Rhino-Deadlock-Cutoff (RDC) complex, composed of rhi/rhino, del/deadlock and cuff/cutoff. Interacts with rhi/rhino; this interaction is indirect and is mediated by del/deadlock. Interacts with del/deadlock (via C-terminal); this interaction is direct. Interacts with Rat1.

It localises to the cytoplasm. The protein resides in the nucleus. The protein localises to the chromosome. Functionally, involved in the piRNA pathway in germline tissues. Part of the Rhino-Deadlock-Cutoff (RDC) complex that stimulates piRNA biogenesis from chromatin regions corresponding to dual-strand, but not single-stranded, piRNA clusters. Promotes transcription of long piRNA precursors by preventing termination at canonical poly(A) sites. As part of the RDC complex, is recruited to chromatin enriched in histone modification H3K9me3 and might contribute to complex interaction by binding nascent transcript nucleic acid chains. Associates with chromatin upon exposure to homologous piRNA. Suppresses cleavage at canonical poly(A) sites by blocking recruitment of the cleavage and polyadenylation specificity factor (CPSF) complex and prevents transcriptional termination by RNA polymerase II, facilitating transcriptional read-through. As part of the RDC complex, involved in suppression of splicing. Catalytically inactive, lacking 5'-3' exonuclease and pyrophosphohydrolase activities. Stabilizes uncapped piRNA precursors in the nucleus, probably by sequestering or blocking the exonuclease activity of Rat1. May also be involved in siRNA biogenesis from dual-strand piRNA clusters. The sequence is that of Protein cutoff (cuff) from Drosophila melanogaster (Fruit fly).